A 250-amino-acid chain; its full sequence is tRNA (guanine-N(7)-)-methyltransferase (250 aa).

Residues Glu79, Glu104, Asp131, and Asp154 each coordinate S-adenosyl-L-methionine. Asp154 is a catalytic residue. Residues Lys158, Asp190, and 228–231 contribute to the substrate site; that span reads TKFE.

Belongs to the class I-like SAM-binding methyltransferase superfamily. TrmB family.

The enzyme catalyses guanosine(46) in tRNA + S-adenosyl-L-methionine = N(7)-methylguanosine(46) in tRNA + S-adenosyl-L-homocysteine. It functions in the pathway tRNA modification; N(7)-methylguanine-tRNA biosynthesis. Functionally, catalyzes the formation of N(7)-methylguanine at position 46 (m7G46) in tRNA. The polypeptide is tRNA (guanine-N(7)-)-methyltransferase (Actinobacillus pleuropneumoniae serotype 5b (strain L20)).